Consider the following 264-residue polypeptide: uncharacterized protein (264 aa).

The first 22 residues, 1-22 (MIHSKKLTLGICLVLLIILIGG), serve as a signal peptide directing secretion. A lipid anchor (N-palmitoyl cysteine) is attached at Cys-23. Cys-23 carries S-diacylglycerol cysteine lipidation.

Belongs to the staphylococcal tandem lipoprotein family.

The protein localises to the cell membrane. This is an uncharacterized protein from Staphylococcus aureus (strain N315).